Here is a 215-residue protein sequence, read N- to C-terminus: Nucleoside triphosphate pyrophosphatase (215 aa).

Asp77 acts as the Proton acceptor in catalysis.

It belongs to the Maf family. The cofactor is a divalent metal cation.

It localises to the cytoplasm. The enzyme catalyses a ribonucleoside 5'-triphosphate + H2O = a ribonucleoside 5'-phosphate + diphosphate + H(+). It carries out the reaction a 2'-deoxyribonucleoside 5'-triphosphate + H2O = a 2'-deoxyribonucleoside 5'-phosphate + diphosphate + H(+). Functionally, nucleoside triphosphate pyrophosphatase. May have a dual role in cell division arrest and in preventing the incorporation of modified nucleotides into cellular nucleic acids. The chain is Nucleoside triphosphate pyrophosphatase from Rickettsia peacockii (strain Rustic).